Reading from the N-terminus, the 428-residue chain is Adenylosuccinate synthetase (428 aa).

Residues 11-17 and 39-41 contribute to the GTP site; these read GDEGKGK and GHT. Asp12 functions as the Proton acceptor in the catalytic mechanism. Asp12 and Gly39 together coordinate Mg(2+). IMP is bound by residues 12 to 15, 37 to 40, Thr130, Arg144, Asn226, Thr241, and Arg305; these read DEGK and NAGH. His40 (proton donor) is an active-site residue. Substrate is bound at residue 301 to 307; it reads VTTGRKR. GTP-binding positions include Arg307, 333 to 335, and 415 to 417; these read KLD and GTG.

This sequence belongs to the adenylosuccinate synthetase family. Homodimer. Requires Mg(2+) as cofactor.

The protein localises to the cytoplasm. The catalysed reaction is IMP + L-aspartate + GTP = N(6)-(1,2-dicarboxyethyl)-AMP + GDP + phosphate + 2 H(+). Its pathway is purine metabolism; AMP biosynthesis via de novo pathway; AMP from IMP: step 1/2. In terms of biological role, plays an important role in the de novo pathway and in the salvage pathway of purine nucleotide biosynthesis. Catalyzes the first committed step in the biosynthesis of AMP from IMP. The polypeptide is Adenylosuccinate synthetase (Komagataella phaffii (strain GS115 / ATCC 20864) (Yeast)).